Reading from the N-terminus, the 302-residue chain is Sulfate adenylyltransferase subunit 2 (302 aa).

Belongs to the PAPS reductase family. CysD subfamily. Heterodimer composed of CysD, the smaller subunit, and CysN.

It carries out the reaction sulfate + ATP + H(+) = adenosine 5'-phosphosulfate + diphosphate. Its pathway is sulfur metabolism; hydrogen sulfide biosynthesis; sulfite from sulfate: step 1/3. Its function is as follows. With CysN forms the ATP sulfurylase (ATPS) that catalyzes the adenylation of sulfate producing adenosine 5'-phosphosulfate (APS) and diphosphate, the first enzymatic step in sulfur assimilation pathway. APS synthesis involves the formation of a high-energy phosphoric-sulfuric acid anhydride bond driven by GTP hydrolysis by CysN coupled to ATP hydrolysis by CysD. This chain is Sulfate adenylyltransferase subunit 2, found in Enterobacter sp. (strain 638).